The following is a 131-amino-acid chain: CDGSH iron-sulfur domain-containing protein 2 homolog (131 aa).

Topologically, residues 1–35 (MQSLSHAVKTSLPNYLSSLPVPDSVGGWFKLSFKD) are lumenal. The helical transmembrane segment at 36-58 (WLALIPPTAVVVGIGYISYQALC) threads the bilayer. At 59-131 (PAAQRKSCSG…NVGPVVIKRN (73 aa)) the chain is on the cytoplasmic side. C97, C99, C108, and H112 together coordinate [2Fe-2S] cluster.

It belongs to the CISD protein family. CISD2 subfamily. [2Fe-2S] cluster serves as cofactor.

The protein resides in the endoplasmic reticulum membrane. The protein is CDGSH iron-sulfur domain-containing protein 2 homolog of Drosophila mojavensis (Fruit fly).